The sequence spans 478 residues: Putative multidrug resistance outer membrane protein MdtQ (478 aa).

Residues 1 to 21 (MNRDSFYPAIACFPLLLMLAG) form the signal peptide. Cys22 carries N-palmitoyl cysteine lipidation. Residue Cys22 is the site of S-diacylglycerol cysteine attachment.

Belongs to the outer membrane factor (OMF) (TC 1.B.17) family.

Its subcellular location is the cell outer membrane. Its function is as follows. Could be involved in resistance to puromycin, acriflavine and tetraphenylarsonium chloride. This chain is Putative multidrug resistance outer membrane protein MdtQ (mdtQ), found in Shigella flexneri.